Consider the following 71-residue polypeptide: Conotoxin Lt11.3 (71 aa).

The N-terminal stretch at 1–26 (MMFRLTSVGCILLVIAFLNLVGLTNA) is a signal peptide. 4 disulfides stabilise this stretch: Cys-27–Cys-41, Cys-34–Cys-46, Cys-40–Cys-50, and Cys-45–Cys-54. Pro-57 is subject to Proline amide. Residues 61 to 71 (TRLQGFFKHRR) constitute a propeptide that is removed on maturation.

The protein belongs to the conotoxin I2 superfamily. As to expression, expressed by the venom duct.

The protein resides in the secreted. Probable neurotoxin. The protein is Conotoxin Lt11.3 of Conus litteratus (Lettered cone).